The sequence spans 322 residues: MDTSSINAQSIFDDNAAMLKLSWLTGHEGWERGFSADTVANATSSADLVGHLNLIHPNRIQVLGEAEIDYYQRQTDEDRSRHMAELIALEPPFLVVAGGAAAPPELVLRCTRSSTPLFTTPMSAAAVIDSLRLYMSRILAPRATLHGVFLDILGMGVLLTGDSGLGKSELGLELISRGHGLVADDAVDFVRLGPDFVEGRCPPLLQNLLEVRGLGLLDIKTIFGETAVRRKMKLKLIVQLVRRPDGEFQRLPLESQTVDVLGLPISKVTIQVAAGRNLAVLVEAAVRNTILQLRGIDTLRDFMDRQRLAMQDPDSQFPGKLV.

Catalysis depends on residues His-146 and Lys-167. Residue 161–168 (GDSGLGKS) participates in ATP binding. Ser-168 contributes to the Mg(2+) binding site. Asp-185 serves as the catalytic Proton acceptor; for phosphorylation activity. Proton donor; for dephosphorylation activity. An important for the catalytic mechanism of both phosphorylation and dephosphorylation region spans residues 209-218 (LEVRGLGLLD). Residue Glu-210 participates in Mg(2+) binding. Residue Arg-250 is part of the active site. An important for the catalytic mechanism of dephosphorylation region spans residues 271–276 (QVAAGR).

Belongs to the HPrK/P family. As to quaternary structure, homohexamer. The cofactor is Mg(2+).

The catalysed reaction is [HPr protein]-L-serine + ATP = [HPr protein]-O-phospho-L-serine + ADP + H(+). It catalyses the reaction [HPr protein]-O-phospho-L-serine + phosphate + H(+) = [HPr protein]-L-serine + diphosphate. Its function is as follows. Catalyzes the ATP- as well as the pyrophosphate-dependent phosphorylation of a specific serine residue in HPr, a phosphocarrier protein of the phosphoenolpyruvate-dependent sugar phosphotransferase system (PTS). HprK/P also catalyzes the pyrophosphate-producing, inorganic phosphate-dependent dephosphorylation (phosphorolysis) of seryl-phosphorylated HPr (P-Ser-HPr). The chain is HPr kinase/phosphorylase from Burkholderia mallei (strain NCTC 10247).